A 324-amino-acid chain; its full sequence is Beta-ketoacyl-[acyl-carrier-protein] synthase III (324 aa).

Catalysis depends on residues Cys112 and His250. The interval 251-255 (QANIR) is ACP-binding. Asn280 is a catalytic residue.

Belongs to the thiolase-like superfamily. FabH family. Homodimer.

It is found in the cytoplasm. The enzyme catalyses malonyl-[ACP] + acetyl-CoA + H(+) = 3-oxobutanoyl-[ACP] + CO2 + CoA. It functions in the pathway lipid metabolism; fatty acid biosynthesis. Catalyzes the condensation reaction of fatty acid synthesis by the addition to an acyl acceptor of two carbons from malonyl-ACP. Catalyzes the first condensation reaction which initiates fatty acid synthesis and may therefore play a role in governing the total rate of fatty acid production. Possesses both acetoacetyl-ACP synthase and acetyl transacylase activities. Its substrate specificity determines the biosynthesis of branched-chain and/or straight-chain of fatty acids. This chain is Beta-ketoacyl-[acyl-carrier-protein] synthase III, found in Clostridium novyi (strain NT).